A 621-amino-acid chain; its full sequence is SH2B adapter protein 2 (621 aa).

Position 47 is a phosphotyrosine (tyrosine 47). The residue at position 130 (serine 130) is a Phosphoserine. The tract at residues 143 to 166 is disordered; sequence RRSSPEPDGGATPKAAEPASEPRD. In terms of domain architecture, PH spans 186–299; it reads DIQREGALRF…WVADIQGCVD (114 aa). Serine 303 bears the Phosphoserine mark. The region spanning 409-507 is the SH2 domain; it reads WFHGTLSRVK…SADITLRSYV (99 aa). 2 disordered regions span residues 507–528 and 549–611; these read VRAQ…PVPA and PASP…LGRA. A compositionally biased stretch (low complexity) spans 552–571; sequence PSNGAGASSSSGSSSSATSL. Serine 597 bears the Phosphoserine mark. Tyrosine 618 bears the Phosphotyrosine mark.

This sequence belongs to the SH2B adapter family. As to quaternary structure, homodimer. Interacts with KIT/c-KIT, SHC1, EPOR, PDGFR, VAV1 and VAV3. Interacts (via N-terminal region) with SHC1. Interacts (via the phosphorylated C-terminus) with GRB2. Interacts (via its SH2 domain) with EPOR, INSR and KIT. Interacts with GRB2 after B-cell antigen receptor stimulation. Interacts (via PH domain) with VAV3. Interacts with NTRK1, NTRK2 and NTRK3 (phosphorylated); after stimulation of the receptor by its extracellular ligand and subsequent autophosphorylation of the receptor. Binds INSR, GRB2, ASB6 and CAP. Insulin stimulation leads to dissociation of CAP. Binds CBS only when SH2B2/APS has become phosphorylated. INSR binding does not depend on the phosphorylation of SH2B2/APS. Tyrosine phosphorylated by JAK2, KIT and other kinases activated by B-cell receptor in response to stimulation with cytokines, IL3, IL5, PDGF, IGF1, IGF2, CSF2/GM-CSF and cross-linking of the B-cell receptor complex. As to expression, strongly expressed in brain; also expressed in spleen, kidney and skeletal muscle, and at low levels in small intestine and bone marrow. Strongly expressed in B-cell lines, but not T-cell lines. Also expressed in myeloid and fibroblast cell lines.

It localises to the cytoplasm. The protein resides in the cell membrane. Its function is as follows. Adapter protein for several members of the tyrosine kinase receptor family. Involved in multiple signaling pathways. May be involved in coupling from immunoreceptor to Ras signaling. Acts as a negative regulator of cytokine signaling in collaboration with CBL. Binds to EPOR and suppresses EPO-induced STAT5 activation, possibly through a masking effect on STAT5 docking sites in EPOR. Suppresses PDGF-induced mitogenesis. May induce cytoskeletal reorganization via interaction with VAV3. The protein is SH2B adapter protein 2 (Sh2b2) of Mus musculus (Mouse).